The primary structure comprises 63 residues: 2-hydroxymuconate tautomerase (63 aa).

Pro2 serves as the catalytic Proton acceptor; via imino nitrogen.

It belongs to the 4-oxalocrotonate tautomerase family. In terms of assembly, homohexamer.

The enzyme catalyses (2Z,4E)-2-hydroxyhexa-2,4-dienedioate = (3E)-2-oxohex-3-enedioate. Its pathway is xenobiotic degradation; toluene degradation. The protein operates within xenobiotic degradation; xylene degradation. In terms of biological role, catalyzes the ketonization of 2-hydroxymuconate stereoselectively to yield 2-oxo-3-hexenedioate. The chain is 2-hydroxymuconate tautomerase (xylH) from Pseudomonas putida (Arthrobacter siderocapsulatus).